A 484-amino-acid chain; its full sequence is Acetaldehyde dehydrogenase (acetylating) (484 aa).

This sequence belongs to the aldehyde dehydrogenase family.

The catalysed reaction is acetaldehyde + NAD(+) + CoA = acetyl-CoA + NADH + H(+). Its pathway is organosulfur degradation; alkanesulfonate degradation. Involved in an anaerobic respiration pathway that converts the sulfonate taurine (2-aminoethanesulfonate) to ammonia, acetate and sulfide. Catalyzes the oxidation of acetaldehyde to acetyl-CoA in the presence of CoASH and NAD(+). Highly prefers NAD(+) over NADP(+). This is Acetaldehyde dehydrogenase (acetylating) from Bilophila wadsworthia (strain 3_1_6).